The sequence spans 253 residues: Phosphoglycerate mutase 2 (253 aa).

Residue Thr-3 is modified to Phosphothreonine. Substrate-binding positions include 10 to 17, 23 to 24, Arg-62, 89 to 92, Lys-100, and 116 to 117; these read RHGESTWN, CG, ERHY, and RR. Catalysis depends on His-11, which acts as the Tele-phosphohistidine intermediate. Ser-14 is modified (phosphoserine). Catalysis depends on Glu-89, which acts as the Proton donor/acceptor. Phosphoserine is present on Ser-118. A phosphotyrosine mark is found at Tyr-132 and Tyr-133. Ser-135 carries the phosphoserine modification. Phosphothreonine is present on Thr-152. A substrate-binding site is contributed by 187 to 188; sequence GN.

Belongs to the phosphoglycerate mutase family. BPG-dependent PGAM subfamily. Homodimer.

It carries out the reaction (2R)-2-phosphoglycerate = (2R)-3-phosphoglycerate. The catalysed reaction is (2R)-3-phospho-glyceroyl phosphate = (2R)-2,3-bisphosphoglycerate + H(+). Functionally, interconversion of 3- and 2-phosphoglycerate with 2,3-bisphosphoglycerate as the primer of the reaction. Can also catalyze the reaction of EC 5.4.2.4 (synthase), but with a reduced activity. This Bos taurus (Bovine) protein is Phosphoglycerate mutase 2 (PGAM2).